A 238-amino-acid chain; its full sequence is tRNA (guanine-N(7)-)-methyltransferase (238 aa).

4 residues coordinate S-adenosyl-L-methionine: Glu71, Glu96, Asp123, and Asp146. Residue Asp146 is part of the active site. Residues Lys150, Asp182, and 217–220 (TKFE) contribute to the substrate site.

This sequence belongs to the class I-like SAM-binding methyltransferase superfamily. TrmB family.

The catalysed reaction is guanosine(46) in tRNA + S-adenosyl-L-methionine = N(7)-methylguanosine(46) in tRNA + S-adenosyl-L-homocysteine. It participates in tRNA modification; N(7)-methylguanine-tRNA biosynthesis. Functionally, catalyzes the formation of N(7)-methylguanine at position 46 (m7G46) in tRNA. The polypeptide is tRNA (guanine-N(7)-)-methyltransferase (Methylobacillus flagellatus (strain ATCC 51484 / DSM 6875 / VKM B-1610 / KT)).